The primary structure comprises 1626 residues: Collagen alpha-1(XXII) chain (1626 aa).

The signal sequence occupies residues 1–27 (MAGLRGNAVAGLLWMLLLWSGGGGCQA). In terms of domain architecture, VWFA spans 38–213 (DLVFLLDTSS…NAIDKIRGKL (176 aa)). The Laminin G-like domain maps to 239 to 427 (GTKEITGFDL…LQRIVIYCDS (189 aa)). N-linked (GlcNAc...) asparagine glycosylation is present at Asn375. 16 Collagen-like domains span residues 481–520 (GEKGEMGVAGPMGLPGPKGDIGAIGPVGAPGPKGEKGDVG), 526–565 (QGEKGEKGSLGLPGPPGRDGSKGMRGEPGELGEPGLPGEV), 566–625 (GMRG…PGPS), 657–708 (GEQG…GIPG), 714–773 (GPPG…PGER), 774–833 (GEDG…PGLK), 868–922 (GPKG…GAPG), 925–984 (GAPG…PGKG), 1047–1095 (AGPP…PGKP), 1118–1155 (PPGPPGLPGLPGFKGDKGVPGKPGREGTEGKKGEAGPP), 1156–1215 (GLPG…AGPP), 1249–1308 (GKPG…PGKD), 1315–1374 (GPQG…PGEK), 1387–1446 (GEPG…PGPP), 1495–1550 (SQGR…PGAP), and 1575–1604 (DGLPGIPGPQGETGPAGHPGLPGPPGPPGQ). 4 disordered regions span residues 506-1002 (PVGA…GPLG), 1019-1103 (GGQC…LLSP), 1119-1458 (PGPP…RGES), and 1491-1609 (YMKS…DPSQ). The span at 544 to 553 (DGSKGMRGEP) shows a compositional bias: basic and acidic residues. The span at 571–580 (QGPPGLPGPP) shows a compositional bias: pro residues. Residues 591 to 606 (ERGEKGTRGEKGERGL) show a composition bias toward basic and acidic residues. Residues 661 to 670 (APGPRGHQGA) are compositionally biased toward low complexity. Pro residues-rich tracts occupy residues 715–728 (PPGPPGVPGPPGPG) and 742–751 (KPGPPGPTGP). Composition is skewed to basic and acidic residues over residues 769–778 (EPGERGEDGL) and 815–826 (RGEKGDQGEKGE). The span at 908–939 (AHGAPGAAGNPGAPGHVGAPGPSGPPGSVGAP) shows a compositional bias: low complexity. Over residues 945-957 (PGKDGERGEKGAA) the composition is skewed to basic and acidic residues. Low complexity-rich tracts occupy residues 959 to 974 (EEGSPGPVGPRGDPGA) and 1056 to 1065 (PGDKGSPGSR). Composition is skewed to basic and acidic residues over residues 1131-1151 (KGDKGVPGKPGREGTEGKKGE) and 1173-1185 (RGADGEVGQKGDQ). Positions 1205–1223 (ADGIAGAAGPPGIQGSPGK) are enriched in low complexity. Basic and acidic residues predominate over residues 1241 to 1250 (EEGKEGRDGK). Over residues 1260–1275 (AGEPGLPGPEGARGPP) the composition is skewed to low complexity. A compositionally biased stretch (low complexity) spans 1379–1389 (KEGVPGKPGEP). Positions 1391–1404 (FKGERGDPGIKGDK) are enriched in basic and acidic residues. A compositionally biased stretch (gly residues) spans 1405 to 1414 (GPPGGKGQPG). A compositionally biased stretch (pro residues) spans 1440 to 1449 (VGPPGPPGQP). Residues 1521 to 1530 (GRPGQGGLEG) are compositionally biased toward gly residues. The segment covering 1595 to 1604 (LPGPPGPPGQ) has biased composition (pro residues).

This sequence belongs to the fibril-associated collagens with interrupted helices (FACIT) family. As to expression, restrictive expression is observed at tissue junctions such as the myotendinous junction in skeletal and heart muscle, the articular cartilage-synovial fluid junction, or the border between the anagen hair follicle and the dermis in the skin. It is deposited in the basement membrane zone of the myotendinous junction and the hair follicle and associated with the extrafibrillar matrix in cartilage.

It localises to the secreted. The protein localises to the extracellular space. It is found in the extracellular matrix. Its subcellular location is the cytoplasm. Functionally, acts as a cell adhesion ligand for skin epithelial cells and fibroblasts. In Homo sapiens (Human), this protein is Collagen alpha-1(XXII) chain (COL22A1).